The following is a 152-amino-acid chain: Deoxyuridine 5'-triphosphate nucleotidohydrolase (152 aa).

Substrate-binding positions include 72–74 (RSG), asparagine 85, 89–91 (TID), and lysine 99.

The protein belongs to the dUTPase family. It depends on Mg(2+) as a cofactor.

It catalyses the reaction dUTP + H2O = dUMP + diphosphate + H(+). Its pathway is pyrimidine metabolism; dUMP biosynthesis; dUMP from dCTP (dUTP route): step 2/2. This enzyme is involved in nucleotide metabolism: it produces dUMP, the immediate precursor of thymidine nucleotides and it decreases the intracellular concentration of dUTP so that uracil cannot be incorporated into DNA. The sequence is that of Deoxyuridine 5'-triphosphate nucleotidohydrolase from Bradyrhizobium diazoefficiens (strain JCM 10833 / BCRC 13528 / IAM 13628 / NBRC 14792 / USDA 110).